Reading from the N-terminus, the 616-residue chain is MNSPGGRGKKKGSGGPSSPVPPRPPPPCLASSRPAPRPAPPPQSPHKRNLYYFSYPLFLGFALLRLVAFHLGLLFVWLCQRFSRALMAAKRSSRAAPAPASASPPAPVPGGEVERVRAFHKQAFEYISVALRIDEDEKVGQKEQAVEWYKKGIEELEKGIAVVVTGQGEQCERARRLQAKMMTNLVMAKDRLQLLEKLQPVLQFSKSQMDVYNDSTNLTCRNGHLQSESGAVPKRKDPLTHPSNSLPRSKAIMKTGSTGLSGHHRAPSCSGLSIVSGMRQGPGPTTATHKSTPKTNRTNKPSTPTTAPRKKKDLKNFRNVDSNLANFIMNEIVDNGTAVKFDDIAGQELAKQALQEIVILPSLRPELFTGLRAPARGLLLFGPPGNGKTMLAKAVAAESNATFFNISAASLTSKYVGEGEKLVRALFAVARELQPSIIFIDEVDSLLRERREGEHDASRRLKTEFLIEFDGVQSAGDDRVLVMGATNRPQELDEAVLRRFIKRVYVSLPNEETRLLLLKNLLCKQGSPLTQKELAQLARLTDGYSGSDLTALAKDAALGPIRELKPEQVKNMSASEMRNIRLSDFTESLKKIKRSVSPQTLEAYIRWNKDFGDTTV.

Residues 1–44 (MNSPGGRGKKKGSGGPSSPVPPRPPPPCLASSRPAPRPAPPPQS) form a disordered region. Positions 1 to 50 (MNSPGGRGKKKGSGGPSSPVPPRPPPPCLASSRPAPRPAPPPQSPHKRNL) are required for nuclear localization. The Cytoplasmic segment spans residues 1-56 (MNSPGGRGKKKGSGGPSSPVPPRPPPPCLASSRPAPRPAPPPQSPHKRNLYYFSYP). The required for interaction with ATL1 stretch occupies residues 1–80 (MNSPGGRGKK…LGLLFVWLCQ (80 aa)). Residues 1–194 (MNSPGGRGKK…LVMAKDRLQL (194 aa)) form a required for midbody localization region. Residues 1 to 300 (MNSPGGRGKK…STPKTNRTNK (300 aa)) are required for interaction with RTN1. Positions 4 to 11 (PGGRGKKK) match the Nuclear localization signal motif. Pro residues-rich tracts occupy residues 18-28 (SPVPPRPPPPC) and 35-44 (APRPAPPPQS). Positions 50–87 (LYYFSYPLFLGFALLRLVAFHLGLLFVWLCQRFSRALM) are required for interaction with SSNA1 and microtubules. The helical intramembrane region spans 57–77 (LFLGFALLRLVAFHLGLLFVW). The Nuclear export signal motif lies at 59–67 (LGFALLRLV). Over 78–616 (LCQRFSRALM…WNKDFGDTTV (539 aa)) the chain is Cytoplasmic. Residues 112–196 (EVERVRAFHK…MAKDRLQLLE (85 aa)) are sufficient for interaction with CHMP1B. The interval 114 to 200 (ERVRAFHKQA…RLQLLEKLQP (87 aa)) is required for interaction with microtubules. The MIT domain occupies 120-195 (HKQAFEYISV…VMAKDRLQLL (76 aa)). The tract at residues 223–266 (GHLQSESGAVPKRKDPLTHPSNSLPRSKAIMKTGSTGLSGHHRA) is disordered. The segment at 226–328 (QSESGAVPKR…NVDSNLANFI (103 aa)) is sufficient for interaction with microtubules. Residues 228-616 (ESGAVPKRKD…WNKDFGDTTV (389 aa)) are sufficient for microtubule severing. Ser245 and Ser268 each carry phosphoserine. The tract at residues 270-328 (SGLSIVSGMRQGPGPTTATHKSTPKTNRTNKPSTPTTAPRKKKDLKNFRNVDSNLANFI) is required for interaction with microtubules and microtubule severing. Residues 278–311 (MRQGPGPTTATHKSTPKTNRTNKPSTPTTAPRKK) are disordered. Over residues 283–306 (GPTTATHKSTPKTNRTNKPSTPTT) the composition is skewed to polar residues. Thr306 is subject to Phosphothreonine. The short motif at 309–312 (RKKK) is the Nuclear localization signal element. Positions 310 to 312 (KKK) are required for interaction with microtubules. 382-389 (GPPGNGKT) is a binding site for ATP. A Phosphoserine modification is found at Ser597.

It belongs to the AAA ATPase family. Spastin subfamily. Homohexamer. Mostly monomeric, but assembles into hexameric structure for short periods of time. Oligomerization seems to be a prerequisite for catalytic activity. Binding to ATP in a cleft between two adjacent subunits stabilizes the homohexameric form. Binds to microtubules at least in part via the alpha-tubulin and beta-tubulin tails. The hexamer adopts a ring conformation through which microtubules pass prior to being severed. Does not interact strongly with tubulin heterodimers. Interacts (via MIT domain) with CHMP1B; the interaction is direct. Interacts with SSNA1. Interacts with ATL1. Interacts with RTN1. Interacts with ZFYVE27. Interacts with REEP1. Interacts (via MIT domain) with IST1.

The protein localises to the membrane. Its subcellular location is the endoplasmic reticulum. The protein resides in the midbody. It is found in the cytoplasm. It localises to the cytoskeleton. The protein localises to the microtubule organizing center. Its subcellular location is the centrosome. The protein resides in the perinuclear region. It is found in the nucleus. It localises to the spindle. The protein localises to the cell projection. Its subcellular location is the axon. The catalysed reaction is n ATP + n H2O + a microtubule = n ADP + n phosphate + (n+1) alpha/beta tubulin heterodimers.. With respect to regulation, allosteric enzyme with a cooperative mechanism; at least two neighbor subunits influence each other strongly in spastin hexamers. Microtubule binding promotes cooperative interactions among spastin subunits. In terms of biological role, ATP-dependent microtubule severing protein that specifically recognizes and cuts microtubules that are polyglutamylated. Preferentially recognizes and acts on microtubules decorated with short polyglutamate tails: severing activity increases as the number of glutamates per tubulin rises from one to eight, but decreases beyond this glutamylation threshold. Severing activity is not dependent on tubulin acetylation or detyrosination. Microtubule severing promotes reorganization of cellular microtubule arrays and the release of microtubules from the centrosome following nucleation. It is critical for the biogenesis and maintenance of complex microtubule arrays in axons, spindles and cilia. SPAST is involved in abscission step of cytokinesis and nuclear envelope reassembly during anaphase in cooperation with the ESCRT-III complex. Recruited at the midbody, probably by IST1, and participates in membrane fission during abscission together with the ESCRT-III complex. Recruited to the nuclear membrane by IST1 and mediates microtubule severing, promoting nuclear envelope sealing and mitotic spindle disassembly during late anaphase. Required for membrane traffic from the endoplasmic reticulum (ER) to the Golgi and endosome recycling. Recruited by IST1 to endosomes and regulates early endosomal tubulation and recycling by mediating microtubule severing. Probably plays a role in axon growth and the formation of axonal branches. This Sus scrofa (Pig) protein is Spastin.